Consider the following 396-residue polypeptide: MTTGKTAPRRLSIFGSTGSIGRNTLNVIEHLGGRENFEISVLTGNGNVELLARQARSSGARLAVTASDRHYESLKRELSGSGIAVASGKSGLMEAADRDADWVMAAIVGTAGLAPTLAAARRGADIALANKECLVSAGDLFIKAIREGGGRLLPVDSEHNAIFQVLEENQRHAIERVILTASGGPFRNASLEEMKHVTAETARAHPNWSMGLKISIDSASMFNKALEMIEARHLFSLNPDQIEVIFHPQSIIHSMVGYTDGSVLAQLGAPDMRTAIGYALSFPRRPKLPVERLDFAKLARLDFEAPDEVRFPALRLAHLAMTRGGVQGAVLNGAKEVALEAFIEGRLAFLAMAEITERVMDDLAHLPPAAGMDDVFSADRQARQRAAELMKLDLVG.

NADPH is bound by residues Thr-17, Gly-18, Ser-19, Ile-20, Asn-47, and Asn-130. Lys-131 lines the 1-deoxy-D-xylulose 5-phosphate pocket. An NADPH-binding site is contributed by Glu-132. A Mn(2+)-binding site is contributed by Asp-156. Residues Ser-157, Glu-158, Ser-182, and His-205 each contribute to the 1-deoxy-D-xylulose 5-phosphate site. Glu-158 lines the Mn(2+) pocket. Gly-211 serves as a coordination point for NADPH. Positions 218, 223, 224, and 227 each coordinate 1-deoxy-D-xylulose 5-phosphate. A Mn(2+)-binding site is contributed by Glu-227.

This sequence belongs to the DXR family. Mg(2+) serves as cofactor. Requires Mn(2+) as cofactor.

It carries out the reaction 2-C-methyl-D-erythritol 4-phosphate + NADP(+) = 1-deoxy-D-xylulose 5-phosphate + NADPH + H(+). Its pathway is isoprenoid biosynthesis; isopentenyl diphosphate biosynthesis via DXP pathway; isopentenyl diphosphate from 1-deoxy-D-xylulose 5-phosphate: step 1/6. In terms of biological role, catalyzes the NADPH-dependent rearrangement and reduction of 1-deoxy-D-xylulose-5-phosphate (DXP) to 2-C-methyl-D-erythritol 4-phosphate (MEP). The chain is 1-deoxy-D-xylulose 5-phosphate reductoisomerase from Rhizobium etli (strain ATCC 51251 / DSM 11541 / JCM 21823 / NBRC 15573 / CFN 42).